Reading from the N-terminus, the 558-residue chain is INCREASED PETAL GROWTH ANISOTROPY 1-like protein 2 (558 aa).

Residues 1–15 (MSRISTTSTTPSRVR) are compositionally biased toward low complexity. The segment at 1 to 54 (MSRISTTSTTPSRVRAANSHYSVISKPRAQDDNGLTGGKPKSSGYDVKNDPAKR) is disordered. Residues 104 to 180 (VMATAAAEDE…EAKISSLSSN (77 aa)) are a coiled coil. Residues 207-285 (KVKKEVAVES…AARAQKSPPV (79 aa)) are disordered. Pro residues-rich tracts occupy residues 221–236 (PPSP…PPLP) and 256–272 (FAPP…PPRP). A coiled-coil region spans residues 392–448 (KADTLQEAAVEYRELKKLEKELSSYSDDPNIHYGVALKKMANLLDKSEQRIRRLVRL).

This sequence belongs to the IPGA1 family.

The protein localises to the cytoplasm. Its subcellular location is the cytoskeleton. Microtubule-associated protein probably involved in the regulation of microtubule organization. In Arabidopsis thaliana (Mouse-ear cress), this protein is INCREASED PETAL GROWTH ANISOTROPY 1-like protein 2.